Reading from the N-terminus, the 680-residue chain is Zinc finger protein OBI1 (680 aa).

Positions valine 16–glycine 87 constitute a KRAB domain. The segment at cysteine 263–histidine 280 adopts a C2H2-type 1; degenerate zinc-finger fold. 8 C2H2-type zinc fingers span residues phenylalanine 455–histidine 477, histidine 483–histidine 505, tyrosine 511–histidine 533, phenylalanine 539–histidine 561, histidine 567–histidine 589, tyrosine 595–histidine 617, tyrosine 623–histidine 645, and phenylalanine 651–histidine 673.

Polyubiquitinated, leading to its degradation via the ubiquitin-proteasome pathway. Expressed during osteogenic differentiation where levels increase from the first days of differentiation and remain high during the whole process. Highly expressed in lung.

It is found in the nucleus. May modulate osteogenic differentiation, at least in part, through the bone morphogenetic protein (BMP) signaling pathway, increasing RUNX2 activation and leading to osteoblast commitment and maturation. The chain is Zinc finger protein OBI1 (ObI1) from Mus musculus (Mouse).